Consider the following 409-residue polypeptide: L-cysteine:1D-myo-inositol 2-amino-2-deoxy-alpha-D-glucopyranoside ligase (409 aa).

Cysteine 43 contributes to the Zn(2+) binding site. Residues 43–46 (CGIT), threonine 58, and 81–83 (NVT) contribute to the L-cysteinyl-5'-AMP site. Residues 45–55 (ITPYDATHMGH) carry the 'HIGH' region motif. A 'ERGGDP' region motif is present at residues 183 to 188 (ERGGDP). Position 224 (tryptophan 224) interacts with L-cysteinyl-5'-AMP. Cysteine 228 contributes to the Zn(2+) binding site. 246-248 (GSD) is a binding site for L-cysteinyl-5'-AMP. Residue histidine 253 coordinates Zn(2+). Valine 280 lines the L-cysteinyl-5'-AMP pocket. Positions 286–290 (KMSKS) match the 'KMSKS' region motif.

The protein belongs to the class-I aminoacyl-tRNA synthetase family. MshC subfamily. Monomer. Zn(2+) is required as a cofactor.

The enzyme catalyses 1D-myo-inositol 2-amino-2-deoxy-alpha-D-glucopyranoside + L-cysteine + ATP = 1D-myo-inositol 2-(L-cysteinylamino)-2-deoxy-alpha-D-glucopyranoside + AMP + diphosphate + H(+). Catalyzes the ATP-dependent condensation of GlcN-Ins and L-cysteine to form L-Cys-GlcN-Ins. This chain is L-cysteine:1D-myo-inositol 2-amino-2-deoxy-alpha-D-glucopyranoside ligase, found in Streptomyces griseus subsp. griseus (strain JCM 4626 / CBS 651.72 / NBRC 13350 / KCC S-0626 / ISP 5235).